Reading from the N-terminus, the 137-residue chain is uncharacterized protein (137 aa).

Residues 5–136 (NRHLIHQINQ…FSHLFRMFLQ (132 aa)) enclose the HTH marR-type domain. Positions 51 to 74 (QKEIWSYLNVEAPTVTRTIKRLEE) form a DNA-binding region, H-T-H motif.

This is an uncharacterized protein from Bacillus subtilis (strain 168).